The primary structure comprises 366 residues: 5-formaminoimidazole-4-carboxamide-1-(beta)-D-ribofuranosyl 5'-monophosphate synthetase (366 aa).

5-amino-1-(5-phospho-beta-D-ribosyl)imidazole-4-carboxamide contacts are provided by H27 and S96. The region spanning 131–357 (RKWLEDAGVP…IAREIKEAVK (227 aa)) is the ATP-grasp domain. ATP is bound by residues 154–208 (PVIV…VRFY) and E239. A 5-amino-1-(5-phospho-beta-D-ribosyl)imidazole-4-carboxamide-binding site is contributed by N263. The Mg(2+) site is built by E302 and E315.

Belongs to the phosphohexose mutase family. Mg(2+) is required as a cofactor. It depends on Mn(2+) as a cofactor.

The enzyme catalyses 5-amino-1-(5-phospho-beta-D-ribosyl)imidazole-4-carboxamide + formate + ATP = 5-formamido-1-(5-phospho-D-ribosyl)imidazole-4-carboxamide + ADP + phosphate. It participates in purine metabolism; IMP biosynthesis via de novo pathway; 5-formamido-1-(5-phospho-D-ribosyl)imidazole-4-carboxamide from 5-amino-1-(5-phospho-D-ribosyl)imidazole-4-carboxamide (formate route): step 1/1. In terms of biological role, catalyzes the ATP- and formate-dependent formylation of 5-aminoimidazole-4-carboxamide-1-beta-d-ribofuranosyl 5'-monophosphate (AICAR) to 5-formaminoimidazole-4-carboxamide-1-beta-d-ribofuranosyl 5'-monophosphate (FAICAR) in the absence of folates. This is 5-formaminoimidazole-4-carboxamide-1-(beta)-D-ribofuranosyl 5'-monophosphate synthetase from Korarchaeum cryptofilum (strain OPF8).